The following is a 385-amino-acid chain: UPF0284 protein P9301_04631 (385 aa).

The protein belongs to the UPF0284 family.

This Prochlorococcus marinus (strain MIT 9301) protein is UPF0284 protein P9301_04631.